The sequence spans 842 residues: Translation initiation factor IF-2 (842 aa).

Disordered stretches follow at residues 1-41 and 112-219; these read MVAK…GFPD and RPNR…QTYQ. Basic and acidic residues-rich tracts occupy residues 32–41 and 153–165; these read PEDKKQGFPD and RRGEGRPFARDFS. A tr-type G domain is found at 328–497; it reads ARPPVVTVMG…MLQAEVMELR (170 aa). A G1 region spans residues 337 to 344; the sequence is GHVDHGKT. GTP is bound at residue 337-344; the sequence is GHVDHGKT. A G2 region spans residues 362–366; that stretch reads GITQH. The G3 stretch occupies residues 383–386; sequence DTPG. Residues 383-387 and 437-440 each bind GTP; these read DTPGH and NKID. The tract at residues 437-440 is G4; it reads NKID. The tract at residues 473–475 is G5; that stretch reads SAL.

This sequence belongs to the TRAFAC class translation factor GTPase superfamily. Classic translation factor GTPase family. IF-2 subfamily.

It localises to the cytoplasm. Functionally, one of the essential components for the initiation of protein synthesis. Protects formylmethionyl-tRNA from spontaneous hydrolysis and promotes its binding to the 30S ribosomal subunits. Also involved in the hydrolysis of GTP during the formation of the 70S ribosomal complex. The chain is Translation initiation factor IF-2 (infB) from Treponema pallidum (strain Nichols).